Reading from the N-terminus, the 211-residue chain is Large ribosomal subunit protein uL3 (211 aa).

The tract at residues 122-157 (NQKRNNFGRGPMSHGSKNHRAPGSIGAGTTPGRVYP) is disordered.

It belongs to the universal ribosomal protein uL3 family. In terms of assembly, part of the 50S ribosomal subunit. Forms a cluster with proteins L14 and L19.

Functionally, one of the primary rRNA binding proteins, it binds directly near the 3'-end of the 23S rRNA, where it nucleates assembly of the 50S subunit. The chain is Large ribosomal subunit protein uL3 from Trichormus variabilis (strain ATCC 29413 / PCC 7937) (Anabaena variabilis).